The chain runs to 305 residues: 4-diphosphocytidyl-2-C-methyl-D-erythritol kinase (305 aa).

K10 is a catalytic residue. 95 to 105 (PVTAGLGGGSS) provides a ligand contact to ATP. Residue D136 is part of the active site. The interval 286-305 (PGVTPWRSPRSASSPSTKRS) is disordered. Low complexity predominate over residues 290 to 305 (PWRSPRSASSPSTKRS).

The protein belongs to the GHMP kinase family. IspE subfamily.

The enzyme catalyses 4-CDP-2-C-methyl-D-erythritol + ATP = 4-CDP-2-C-methyl-D-erythritol 2-phosphate + ADP + H(+). Its pathway is isoprenoid biosynthesis; isopentenyl diphosphate biosynthesis via DXP pathway; isopentenyl diphosphate from 1-deoxy-D-xylulose 5-phosphate: step 3/6. Catalyzes the phosphorylation of the position 2 hydroxy group of 4-diphosphocytidyl-2C-methyl-D-erythritol. This chain is 4-diphosphocytidyl-2-C-methyl-D-erythritol kinase, found in Anaeromyxobacter sp. (strain Fw109-5).